A 266-amino-acid chain; its full sequence is Integral membrane protein 2B (266 aa).

Topologically, residues 1 to 54 (MVKVTFNSALAQKEAKKDEPKSSEEALIVPPDAVAVDCKDPGDVVPVGQRRAWC) are cytoplasmic. A helical; Signal-anchor for type II membrane protein transmembrane segment spans residues 55–75 (WCMCFGLAFMLAGVILGGAYL). Residues 76 to 266 (YKYFALQPDD…KFAVETLICS (191 aa)) lie on the Lumenal side of the membrane. The interval 102 to 134 (EPSADAPAARYQTIEENIKIFEEDAVEFISVPV) is necessary for interaction with APP and inhibitor effects on APP processing. The BRICHOS domain maps to 137–231 (FADSDPANIV…LCHDKETYKL (95 aa)). Disulfide bonds link C164-C223 and C248-C265. A glycan (N-linked (GlcNAc...) asparagine) is linked at N170.

This sequence belongs to the ITM2 family. Homodimer; disulfide-linked. Interacts with SPPL2A and SPPL2B. Interacts with APP. Mature BRI2 (mBRI2) interacts with the APP amyloid-beta A4 protein; the interaction occurs at the cell surface and in the endocytic compartments and enable alpha- and beta-secretase-induced APP cleavage inhibition. Mature BRI2 (mBRI2) interacts with the APP C99; the interaction occurs in the endocytic compartments and enable gamma-secretase-induced C99 cleavage inhibition. May form heterodimers with Bri23 peptide and APP amyloid-beta protein 40. Interacts with ADAM7 in sperm; the interaction increases following capacitation. Post-translationally, the ectodomain C-terminal part of the imBRI2 is processed by furin producing a secreted Bri23 peptide and a mature BRI2, membrane form (mBRI2). The remaining part of the ectodomain of mBRI2 containing the BRICHOS domain is cleaved by ADAM10 and is secreted (BRI2C, soluble form). The membrane-bound N-terminal fragment (BRI2C, membrane form) is further proteolytically processed by SPPL2A and SPPL2B through regulated intramembrane proteolysis producing a secreted C-peptide and a BRI2 intracellular domain (BRI2 ICD) released in the cytosol. Shedding by ADAM10 facilitates intramembrane cleavage but is not absolutely required for BRI2 ICD generation. Glycosylation at Asn-170 is important for cell surface localization, but doesn't affect furin- and ADAM10-induced proteolytic processing. In terms of tissue distribution, expressed in the brain, testis, testicular sperm, epididymis and mature epididymal sperm (at protein level).

The protein localises to the golgi apparatus membrane. The protein resides in the cell membrane. It is found in the endosome membrane. Its subcellular location is the secreted. Plays a regulatory role in the processing of the amyloid-beta A4 precursor protein (APP) and acts as an inhibitor of the amyloid-beta peptide aggregation and fibrils deposition. Plays a role in the induction of neurite outgrowth. Functions as a protease inhibitor by blocking access of secretases to APP cleavage sites. In terms of biological role, mature BRI2 (mBRI2) functions as a modulator of the amyloid-beta A4 precursor protein (APP) processing leading to a strong reduction in the secretion of secretase-processed amyloid-beta protein 40 and amyloid-beta protein 42. Functionally, bri23 peptide prevents aggregation of APP amyloid-beta protein 42 into toxic oligomers. The protein is Integral membrane protein 2B (Itm2b) of Mus musculus (Mouse).